Reading from the N-terminus, the 347-residue chain is Heat-inducible transcription repressor HrcA (347 aa).

This sequence belongs to the HrcA family.

Its function is as follows. Negative regulator of class I heat shock genes (grpE-dnaK-dnaJ and groELS operons). Prevents heat-shock induction of these operons. The chain is Heat-inducible transcription repressor HrcA from Rhodococcus jostii (strain RHA1).